Reading from the N-terminus, the 1262-residue chain is Histone-lysine N-methyltransferase eggless (1262 aa).

The tract at residues 1–194 is disordered; sequence MSGQPTAVDC…MEVDQDVEES (194 aa). Composition is skewed to basic and acidic residues over residues 26–41, 50–61, and 81–99; these read ASREKSYGLPVRKGEN, AAKDVEIEELTH, and APDEPGKLADESEDRKGEN. Low complexity predominate over residues 157–166; that stretch reads SSISSPTSES. Over residues 167 to 179 the composition is skewed to basic and acidic residues; the sequence is FPEKDEKTNKENE. Residue serine 215 is modified to Phosphoserine. Residue threonine 217 is modified to Phosphothreonine. Residues 353–420 are a coiled coil; that stretch reads EKSDFSKNKL…LEKVQTTADK (68 aa). Tudor domains follow at residues 529 to 602 and 629 to 686; these read RLTI…SEKV and QCTR…RETQ. Positions 743–764 are disordered; the sequence is SSAATPAGGRTNAGGVSTSNSA. The MBD domain maps to 818 to 884; the sequence is LDSYSPLAKP…DNFDFTPDLK (67 aa). Residues 946–1018 enclose the Pre-SET domain; that stretch reads LCCDCEDDCS…NCLNRVVQFS (73 aa). Positions 948, 950, 954, 960, 962, 1000, 1004, 1006, and 1010 each coordinate Zn(2+). One can recognise an SET domain in the interval 1021-1237; sequence MKLQVFKTSN…SGTELTWNYN (217 aa). S-adenosyl-L-methionine is bound by residues 1031 to 1033, aspartate 1069, and tyrosine 1071; that span reads RGW. Positions 1086–1097 are enriched in basic and acidic residues; it reads EGYESEVDHSDP. The tract at residues 1086–1148 is disordered; it reads EGYESEVDHS…QSSELDSQER (63 aa). Acidic residues predominate over residues 1098–1113; it reads DAEEDNGGPDAEDDDD. Positions 1129–1141 are enriched in low complexity; sequence RSGSTQNSSTQSS. Residues arginine 1191 and 1194–1195 contribute to the S-adenosyl-L-methionine site; that span reads NH. 4 residues coordinate Zn(2+): cysteine 1197, cysteine 1250, cysteine 1252, and cysteine 1257. A Post-SET domain is found at 1246–1262; the sequence is KVLYCQCGAPNCRLRLL.

This sequence belongs to the class V-like SAM-binding methyltransferase superfamily. Histone-lysine methyltransferase family. Suvar3-9 subfamily. As to expression, expressed in ovary (at protein level).

The protein resides in the nucleus. It localises to the chromosome. The enzyme catalyses L-lysyl(9)-[histone H3] + 3 S-adenosyl-L-methionine = N(6),N(6),N(6)-trimethyl-L-lysyl(9)-[histone H3] + 3 S-adenosyl-L-homocysteine + 3 H(+). Its function is as follows. Histone methyltransferase that specifically trimethylates 'Lys-10' of histone H3 (H3K9me3) in ovary. H3K9me3 represents a specific tag for epigenetic transcriptional repression by recruiting Su(var)205/HP1 to methylated histones. Plays a central role during oogenesis. In Drosophila melanogaster (Fruit fly), this protein is Histone-lysine N-methyltransferase eggless (egg).